We begin with the raw amino-acid sequence, 51 residues long: Ribosome biogenesis protein Nop10 (51 aa).

The protein belongs to the NOP10 family.

In terms of biological role, involved in ribosome biogenesis; more specifically in 18S rRNA pseudouridylation and in cleavage of pre-rRNA. In Methanosarcina barkeri (strain Fusaro / DSM 804), this protein is Ribosome biogenesis protein Nop10.